A 256-amino-acid chain; its full sequence is Acetylglutamate kinase (256 aa).

Residues 40-41 (GG), Arg-62, and Asn-154 contribute to the substrate site.

This sequence belongs to the acetylglutamate kinase family. ArgB subfamily.

It localises to the cytoplasm. It carries out the reaction N-acetyl-L-glutamate + ATP = N-acetyl-L-glutamyl 5-phosphate + ADP. The protein operates within amino-acid biosynthesis; L-arginine biosynthesis; N(2)-acetyl-L-ornithine from L-glutamate: step 2/4. In terms of biological role, catalyzes the ATP-dependent phosphorylation of N-acetyl-L-glutamate. This is Acetylglutamate kinase from Staphylococcus aureus (strain bovine RF122 / ET3-1).